The sequence spans 523 residues: Synaptotagmin-10 (523 aa).

At 1–55 the chain is on the vesicular side; it reads MSFRKEDGVSSLCQKALHIITELCFAGQVEWDKCSGIFPADRSGQGGGGTDISVS. The tract at residues 13–35 is cysteine motif; that stretch reads CQKALHIITELCFAGQVEWDKCS. Residues 56-76 form a helical membrane-spanning segment; it reads LLAVVVSFCGLALLVVSLFVF. Residues 77 to 523 lie on the Cytoplasmic side of the membrane; sequence WKLCWPCWKS…CSSPRPPSTP (447 aa). Residue Thr136 is modified to Phosphothreonine. 2 consecutive C2 domains span residues 231 to 352 and 363 to 496; these read TCGK…TVWK and DLGE…THWH. Ca(2+)-binding residues include Asp262, Asp268, Asp320, Phe321, Asp322, Ser325, Asp328, Asp394, Asp400, Asp454, and Asp456.

The protein belongs to the synaptotagmin family. Homodimer; disulfide-linked via the cysteine motif. Can also form heterodimers with SYT3, SYT6, SYT7 and SYT9. Requires Ca(2+) as cofactor. As to expression, highly expressed in the olfactory bulb.

It localises to the cytoplasmic vesicle. It is found in the secretory vesicle membrane. In terms of biological role, ca(2+) sensor specifically required for the Ca(2+)-dependent exocytosis of secretory vesicles containing IGF1 in neurons of the olfactory bulb. Exocytosis of IGF1 is required for sensory perception of smell. Not involved in Ca(2+)-dependent synaptic vesicle exocytosis. Acts through Ca(2+) and phospholipid binding to the C2 domain: Ca(2+) induces binding of the C2-domains to phospholipid membranes and to assembled SNARE-complexes; both actions contribute to triggering exocytosis. The polypeptide is Synaptotagmin-10 (Mus musculus (Mouse)).